The sequence spans 202 residues: Recombination protein RecR (202 aa).

Residues cysteine 56 to cysteine 71 form a C4-type zinc finger. The Toprim domain occupies glycine 79–proline 179.

This sequence belongs to the RecR family.

In terms of biological role, may play a role in DNA repair. It seems to be involved in an RecBC-independent recombinational process of DNA repair. It may act with RecF and RecO. This Granulibacter bethesdensis (strain ATCC BAA-1260 / CGDNIH1) protein is Recombination protein RecR.